The chain runs to 460 residues: Equilibrative nucleoside transporter 1 (460 aa).

Topologically, residues 1–12 (MTTSHQPQDRYK) are cytoplasmic. Residues 13–29 (AVWLIFFVLGLGTLLPW) traverse the membrane as a helical segment. Over 30–82 (NFFMTATKYFTNRLDVSQNVSSDTDQSCESTKALADPTVALPARSSLSAIFNN) the chain is Extracellular. Asn48 carries an N-linked (GlcNAc...) asparagine glycan. Residues 83–107 (VMTLCAMLPLLVFTCLNSFLHQRIS) traverse the membrane as a helical segment. The Cytoplasmic segment spans residues 108–111 (QSVR). The chain crosses the membrane as a helical span at residues 112–130 (ILGSLLAILLVFLVTAALV). Residues 131–138 (KVEMDALI) are Extracellular-facing. Residues 139 to 157 (FFVITMIKIVLINSFGAIL) traverse the membrane as a helical segment. Residues 158 to 174 (QASLFGLAGVLPANYTA) are Cytoplasmic-facing. The chain crosses the membrane as a helical span at residues 175-199 (PIMSGQGLAGFFTSVAMICAIASGS). Residues 200 to 206 (ELSESAF) are Extracellular-facing. The helical transmembrane segment at 207–227 (GYFITACAVVILAILCYLALP) threads the bilayer. The Cytoplasmic portion of the chain corresponds to 228–291 (RTEFYRHYLQ…IKAILKSICV (64 aa)). Residue Ser254 is modified to Phosphoserine. Over residues 255–266 (KGEEPKGRREES) the composition is skewed to basic and acidic residues. A disordered region spans residues 255–277 (KGEEPKGRREESGVPGPNSPPTN). Ser273 carries the phosphoserine modification. A helical transmembrane segment spans residues 292 to 311 (PALSVCFIFTVTIGLFPAVT). The Extracellular portion of the chain corresponds to 312-323 (AEVESSIAGTSP). The helical transmembrane segment at 324–342 (WKSYFIPVACFLNFNVFDW) threads the bilayer. Over 343–359 (LGRSLTAVCMWPGQDSR) the chain is Cytoplasmic. The helical transmembrane segment at 360–378 (WLPVLVASRIVFIPLLMLC) threads the bilayer. The Extracellular portion of the chain corresponds to 379 to 397 (NVKARHCGAQRHHFVFKHD). The chain crosses the membrane as a helical span at residues 398-417 (AWFIAFMAAFAFSNGYLASL). Residues 418–435 (CMCFGPKKVKPAEAETAG) lie on the Cytoplasmic side of the membrane. The chain crosses the membrane as a helical span at residues 436–456 (NIMSFFLCLGLALGAVLSFLL). Residues 457–460 (RALV) lie on the Extracellular side of the membrane.

This sequence belongs to the SLC29A/ENT transporter (TC 2.A.57) family. Identified in a complex with STOM. Post-translationally, glycosylated. As to expression, highly expressed in heart, spleen, lung, liver and testis. Lower level of expression in brain and kidney. Expressed in adipose tissues, brown adipocytes expressing significantly higher amounts than white adipocytes. Expressed in seminiferous tubules.

It is found in the basolateral cell membrane. It localises to the apical cell membrane. The protein resides in the cell membrane. It carries out the reaction adenosine(in) = adenosine(out). It catalyses the reaction guanosine(in) = guanosine(out). The enzyme catalyses inosine(in) = inosine(out). The catalysed reaction is uridine(out) = uridine(in). It carries out the reaction thymidine(in) = thymidine(out). It catalyses the reaction cytidine(in) = cytidine(out). The enzyme catalyses adenine(out) = adenine(in). The catalysed reaction is guanine(out) = guanine(in). It carries out the reaction thymine(out) = thymine(in). It catalyses the reaction uracil(in) = uracil(out). The enzyme catalyses hypoxanthine(out) = hypoxanthine(in). With respect to regulation, transporter activity is sensitive to low concentrations of the inhibitor nitrobenzylmercaptopurine riboside (NBMPR). In terms of biological role, uniporter involved in the facilitative transport of nucleosides and nucleobases, and contributes to maintaining their cellular homeostasis. Functions as a Na(+)-independent transporter. Involved in the transport of nucleosides such as adenosine, guanosine, inosine, uridine, thymidine and cytidine. Also transports purine (hypoxanthine, adenine, guanine) and pyrimidine nucleobases (thymine, uracil). Mediates basolateral nucleoside uptake into Sertoli cells, thereby regulating the transport of nucleosides in testis across the blood-testis-barrier. Regulates inosine levels in brown adipocytes tissues (BAT) and extracellular inosine levels, which controls BAT-dependent energy expenditure. This is Equilibrative nucleoside transporter 1 from Mus musculus (Mouse).